A 547-amino-acid chain; its full sequence is Chaperonin GroEL 1 (547 aa).

Residues 30–33 (TLGP), lysine 51, 87–91 (DGTTT), glycine 415, and aspartate 496 each bind ATP.

Belongs to the chaperonin (HSP60) family. As to quaternary structure, forms a cylinder of 14 subunits composed of two heptameric rings stacked back-to-back. Interacts with the co-chaperonin GroES.

It is found in the cytoplasm. It carries out the reaction ATP + H2O + a folded polypeptide = ADP + phosphate + an unfolded polypeptide.. Its function is as follows. Together with its co-chaperonin GroES, plays an essential role in assisting protein folding. The GroEL-GroES system forms a nano-cage that allows encapsulation of the non-native substrate proteins and provides a physical environment optimized to promote and accelerate protein folding. The sequence is that of Chaperonin GroEL 1 from Bradyrhizobium sp. (strain BTAi1 / ATCC BAA-1182).